Here is a 79-residue protein sequence, read N- to C-terminus: Short neurotoxin 2 (79 aa).

Residues 1 to 21 form the signal peptide; that stretch reads MKTLLLTLVMVTIMCLDLGYT. Cystine bridges form between C24/C41, C34/C59, C63/C71, and C72/C77.

It belongs to the three-finger toxin family. Short-chain subfamily. Type III alpha-neurotoxin sub-subfamily. In terms of tissue distribution, expressed by the venom gland.

It localises to the secreted. In terms of biological role, binds with high affinity to muscle nicotinic acetylcholine receptor (nAChR) and hinders acetylcholine binding to the receptor, thereby impairing neuromuscular transmission. Competes with the binding of alpha-bungarotoxin on muscle AChR (from Torpedo) with an IC(50) of 0.30 uM. Causes muscle paralysis, spasms and increased respiration. The chain is Short neurotoxin 2 from Pseudonaja textilis (Eastern brown snake).